Reading from the N-terminus, the 204-residue chain is High frequency lysogenization protein HflD homolog (204 aa).

The protein belongs to the HflD family.

The protein localises to the cytoplasm. The protein resides in the cell inner membrane. The sequence is that of High frequency lysogenization protein HflD homolog from Actinobacillus succinogenes (strain ATCC 55618 / DSM 22257 / CCUG 43843 / 130Z).